The chain runs to 60 residues: Large ribosomal subunit protein uL30 (60 aa).

This sequence belongs to the universal ribosomal protein uL30 family. Part of the 50S ribosomal subunit.

In Christiangramia forsetii (strain DSM 17595 / CGMCC 1.15422 / KT0803) (Gramella forsetii), this protein is Large ribosomal subunit protein uL30.